The sequence spans 569 residues: Small ribosomal subunit protein bS1 (569 aa).

S1 motif domains are found at residues 52-116, 134-199, 220-288, 305-375, 392-462, and 479-548; these read GAIL…LSRE, GSIV…VSRR, GERR…LGLK, GKRV…LGLK, GLRV…LGVK, and GSDI…LSIK.

It belongs to the bacterial ribosomal protein bS1 family.

Its function is as follows. Binds mRNA; thus facilitating recognition of the initiation point. It is needed to translate mRNA with a short Shine-Dalgarno (SD) purine-rich sequence. The chain is Small ribosomal subunit protein bS1 (rpsA) from Chlamydia trachomatis serovar D (strain ATCC VR-885 / DSM 19411 / UW-3/Cx).